The chain runs to 407 residues: Histidine--tRNA ligase (407 aa).

The protein belongs to the class-II aminoacyl-tRNA synthetase family. In terms of assembly, homodimer.

Its subcellular location is the cytoplasm. The catalysed reaction is tRNA(His) + L-histidine + ATP = L-histidyl-tRNA(His) + AMP + diphosphate + H(+). The chain is Histidine--tRNA ligase from Wolbachia pipientis subsp. Culex pipiens (strain wPip).